Consider the following 423-residue polypeptide: Maltoporin 1 (423 aa).

The first 23 residues, Met1–Ala23, serve as a signal peptide directing secretion.

Belongs to the porin LamB (TC 1.B.3) family. As to quaternary structure, homotrimer formed of three 18-stranded antiparallel beta-barrels, containing three independent channels.

The protein localises to the cell outer membrane. The enzyme catalyses beta-maltose(in) = beta-maltose(out). In terms of biological role, involved in the transport of maltose and maltodextrins. The protein is Maltoporin 1 of Klebsiella pneumoniae subsp. pneumoniae (strain ATCC 700721 / MGH 78578).